Reading from the N-terminus, the 512-residue chain is Oxalate--CoA ligase (512 aa).

Position 168-179 (168-179) interacts with ATP; the sequence is HTSGTTGRPKVV. Residues S283 and S284 each carry the phosphoserine modification. An FACS motif is present at residues 381-429; sequence DRFFRTGDEGKLDKDGYVFITGRIKELVNRGGEKISPAEIDAVLMQHPD. The Microbody targeting signal signature appears at 510–512; it reads AKL.

It belongs to the ATP-dependent AMP-binding enzyme family.

It is found in the peroxisome matrix. Its subcellular location is the peroxisome membrane. The enzyme catalyses oxalate + ATP + CoA = oxalyl-CoA + AMP + diphosphate. Functionally, catalyzes the first step in a degradation pathway of oxalate to CO(2) to protect the cell against the harmful effects of oxalate derived from endogenous processes or an environmental sources. The protein is Oxalate--CoA ligase (pcs60) of Schizosaccharomyces pombe (strain 972 / ATCC 24843) (Fission yeast).